We begin with the raw amino-acid sequence, 522 residues long: 56 kDa type-specific antigen (522 aa).

Residues 1–22 (MKKIMLIASAMSALSLPFSASA) form the signal peptide. Residues 67-87 (LTTMLPFGGTLAAGMTIAPGF) form a helical membrane-spanning segment. The segment at 385 to 417 (AQEEGDDQSQVSCNDKKQQAVAEDSKAGSSKEG) is disordered. Basic and acidic residues predominate over residues 398–417 (NDKKQQAVAEDSKAGSSKEG). Residues 470–490 (IGVVASGVLGVAINVADGVCV) traverse the membrane as a helical segment.

It is found in the cell membrane. Its function is as follows. May be an adherent factor for rickettsial adsorption to the host-cell surface and a determinant of virulence of individual rickettsial strain. It is the major outer membrane protein. The protein is 56 kDa type-specific antigen of Orientia tsutsugamushi (Rickettsia tsutsugamushi).